The sequence spans 128 residues: Large ribosomal subunit protein uL22 (128 aa).

It belongs to the universal ribosomal protein uL22 family. As to quaternary structure, part of the 50S ribosomal subunit.

Its function is as follows. This protein binds specifically to 23S rRNA; its binding is stimulated by other ribosomal proteins, e.g. L4, L17, and L20. It is important during the early stages of 50S assembly. It makes multiple contacts with different domains of the 23S rRNA in the assembled 50S subunit and ribosome. The globular domain of the protein is located near the polypeptide exit tunnel on the outside of the subunit, while an extended beta-hairpin is found that lines the wall of the exit tunnel in the center of the 70S ribosome. The polypeptide is Large ribosomal subunit protein uL22 (Rhodopseudomonas palustris (strain BisB18)).